The primary structure comprises 470 residues: Uronate isomerase (470 aa).

This sequence belongs to the metallo-dependent hydrolases superfamily. Uronate isomerase family.

It catalyses the reaction D-glucuronate = D-fructuronate. The catalysed reaction is aldehydo-D-galacturonate = keto-D-tagaturonate. The protein operates within carbohydrate metabolism; pentose and glucuronate interconversion. This Salmonella agona (strain SL483) protein is Uronate isomerase.